Here is a 149-residue protein sequence, read N- to C-terminus: Calmodulin (149 aa).

The residue at position 2 (alanine 2) is an N-acetylalanine. EF-hand domains are found at residues 8-43 (EQIA…LGQN), 44-79 (PTEA…KMKD), 81-116 (DTEE…LGEK), and 117-149 (LTDE…MMAK). Residues aspartate 21, aspartate 23, aspartate 25, threonine 27, glutamate 32, aspartate 57, aspartate 59, asparagine 61, threonine 63, glutamate 68, aspartate 94, aspartate 96, asparagine 98, and glutamate 105 each contribute to the Ca(2+) site. Lysine 116 carries the N6,N6,N6-trimethyllysine modification. Aspartate 130, aspartate 132, aspartate 134, glutamine 136, and glutamate 141 together coordinate Ca(2+).

This sequence belongs to the calmodulin family.

Calmodulin mediates the control of a large number of enzymes, ion channels and other proteins by Ca(2+). Among the enzymes to be stimulated by the calmodulin-Ca(2+) complex are a number of protein kinases and phosphatases. The sequence is that of Calmodulin from Karlodinium veneficum (Dinoflagellate).